The sequence spans 263 residues: Putative S-adenosyl-L-methionine-dependent methyltransferase Mjls_0079 (263 aa).

S-adenosyl-L-methionine contacts are provided by residues Asp121 and 150–151 (ES).

It belongs to the UPF0677 family.

Functionally, exhibits S-adenosyl-L-methionine-dependent methyltransferase activity. The sequence is that of Putative S-adenosyl-L-methionine-dependent methyltransferase Mjls_0079 from Mycobacterium sp. (strain JLS).